A 918-amino-acid polypeptide reads, in one-letter code: Sarcosine dehydrogenase, mitochondrial (918 aa).

Residues 1–13 (MASLSRALRVAAA) show a composition bias toward low complexity. A mitochondrion-targeting transit peptide spans 1–22 (MASLSRALRVAAAHPRQSPTRG). The interval 1–40 (MASLSRALRVAAAHPRQSPTRGMGPCNLSSAAGPTAEKSV) is disordered. Lys38 carries the post-translational modification N6-succinyllysine. His108 is subject to Tele-8alpha-FAD histidine. Residue Lys173 is modified to N6-acetyllysine; alternate. Residue Lys173 is modified to N6-succinyllysine; alternate. An N6-succinyllysine mark is found at Lys377 and Lys391. Residues Lys559 and Lys775 each carry the N6-acetyllysine modification. Residue Tyr777 is modified to Phosphotyrosine. N6-acetyllysine; alternate occurs at positions 802, 884, and 904. 3 positions are modified to N6-succinyllysine; alternate: Lys802, Lys884, and Lys904.

This sequence belongs to the GcvT family. FAD is required as a cofactor. As to expression, expressed in pancreas, liver and kidney.

The protein localises to the mitochondrion matrix. The catalysed reaction is (6S)-5,6,7,8-tetrahydrofolyl-(gamma-L-Glu)(n) + sarcosine + oxidized [electron-transfer flavoprotein] + H(+) = (6R)-5,10-methylenetetrahydrofolyl-(gamma-L-Glu)(n) + reduced [electron-transfer flavoprotein] + glycine. The protein operates within amine and polyamine degradation; sarcosine degradation; formaldehyde and glycine from sarcosine: step 1/1. In terms of biological role, catalyzes the last step of the oxidative degradation of choline to glycine. Converts sarcosine into glycine. This chain is Sarcosine dehydrogenase, mitochondrial, found in Homo sapiens (Human).